A 280-amino-acid chain; its full sequence is 4-hydroxy-tetrahydrodipicolinate reductase (280 aa).

NAD(+)-binding positions include glycine 14–methionine 19, aspartate 40, alanine 106–threonine 108, and alanine 130–methionine 133. Histidine 166 acts as the Proton donor/acceptor in catalysis. Histidine 167 contributes to the (S)-2,3,4,5-tetrahydrodipicolinate binding site. Lysine 170 functions as the Proton donor in the catalytic mechanism. Glycine 176–threonine 177 provides a ligand contact to (S)-2,3,4,5-tetrahydrodipicolinate.

Belongs to the DapB family.

The protein resides in the cytoplasm. The enzyme catalyses (S)-2,3,4,5-tetrahydrodipicolinate + NAD(+) + H2O = (2S,4S)-4-hydroxy-2,3,4,5-tetrahydrodipicolinate + NADH + H(+). It catalyses the reaction (S)-2,3,4,5-tetrahydrodipicolinate + NADP(+) + H2O = (2S,4S)-4-hydroxy-2,3,4,5-tetrahydrodipicolinate + NADPH + H(+). Its pathway is amino-acid biosynthesis; L-lysine biosynthesis via DAP pathway; (S)-tetrahydrodipicolinate from L-aspartate: step 4/4. Functionally, catalyzes the conversion of 4-hydroxy-tetrahydrodipicolinate (HTPA) to tetrahydrodipicolinate. This is 4-hydroxy-tetrahydrodipicolinate reductase from Rhodopirellula baltica (strain DSM 10527 / NCIMB 13988 / SH1).